A 98-amino-acid chain; its full sequence is Probable sodium channel toxin Ts27 (98 aa).

The N-terminal stretch at 1–22 (MYNMVSLFIVAVLLLTYANVEG) is a signal peptide. Cystine bridges form between Cys36–Cys88, Cys40–Cys63, Cys49–Cys68, and Cys53–Cys70.

It belongs to the long (4 C-C) scorpion toxin superfamily. Sodium channel inhibitor family. Expressed by the venom gland.

The protein localises to the secreted. In terms of biological role, probable sodium channel toxin. This chain is Probable sodium channel toxin Ts27, found in Tityus serrulatus (Brazilian scorpion).